We begin with the raw amino-acid sequence, 630 residues long: MSIPEESEINKDYTVQEDLDEFAKYTCVYKKRHDEKIEYITAQHDWNPVYEAVVPRKSKPGKDEKREGFMYPILRWPLMFTAFLCLTFVAFLYLLDRLYINCYEYFIVWRGEARRLRKLLQEAKTYEEWKERARALDKYFGNDEWKLDPVYDYYDYTLVQAVYSSLVKHREQKDWNALKSVLDVCVRSNFGGIDSSMLYSRTYSGTKKLVEDYVNELKVCLETVIDQRLYTAQERSKMFEYFSHNYGRTALCLSGGASFAIYHTGVLRALLNQDLIPNVITGTSGGGLLAALVCTRTNEELKQLLVPELASKYQSDIGNWLDATKRYFRTGARFDEILWAKTCMYFTRGSLTFAEAYKRTGRILNISVIPSDVHSPPKLINYLTSPDTVIWSAVIASCAVPGILNPIPLMTRSQSHRLIPHNFGNRFKDGSLRTDIPLSELRTQFNVHFSIVSQTNPHVQVFFFSPRGTVGRPVSHRKGRGWRGGYVGSAIEQFLKYDMIKWLHVIRSLELLPRPLGTDWSSVFLQKFDGTITIWPKTKFQDFYYILSPPSVERLGYMIDAGQAATFPKLDFIAARMTIEKLIEKGRMMDKPSKLGRSIDGTIGTSMSRGDIEISQESASISPEDIDIVN.

The PNPLA domain occupies 251–442; that stretch reads LCLSGGASFA…RTDIPLSELR (192 aa). The GXSXG motif lies at 282 to 286; sequence GTSGG. The active-site Nucleophile is Ser-284. Residue Asp-429 is the Proton acceptor of the active site.

The protein belongs to the PLPL family.

The protein resides in the lipid droplet. The catalysed reaction is a triacylglycerol + H2O = a diacylglycerol + a fatty acid + H(+). In terms of biological role, lipid particle-localized triacylglycerol (TAG) lipase. The lipid droplet/particle is a lipid storage compartment which serves as a depot of energy and building blocks for membrane lipid biosynthesis. Involved in the mobilization of the non-polar storage lipids triacylglycerols (TAGs) from lipid particles by hydrolysis of TAGs, releasing and supplying specific fatty acids to the appropriate metabolic pathways. This chain is Triacylglycerol lipase ptl2 (ptl2), found in Schizosaccharomyces pombe (strain 972 / ATCC 24843) (Fission yeast).